The following is a 78-amino-acid chain: MGSLSIWHWIVVIAVVLLLFGRGKISDLMGDVAQGIKSFKKGLQDDEKTAEKSEPVKSIDHTSTPGATNRTDVGSKAV.

A helical transmembrane segment spans residues 1 to 21 (MGSLSIWHWIVVIAVVLLLFG). The span at 43–60 (LQDDEKTAEKSEPVKSID) shows a compositional bias: basic and acidic residues. The disordered stretch occupies residues 43–78 (LQDDEKTAEKSEPVKSIDHTSTPGATNRTDVGSKAV). Positions 61–72 (HTSTPGATNRTD) are enriched in polar residues.

It belongs to the TatA/E family. The Tat system comprises two distinct complexes: a TatABC complex, containing multiple copies of TatA, TatB and TatC subunits, and a separate TatA complex, containing only TatA subunits. Substrates initially bind to the TatABC complex, which probably triggers association of the separate TatA complex to form the active translocon.

It localises to the cell inner membrane. Its function is as follows. Part of the twin-arginine translocation (Tat) system that transports large folded proteins containing a characteristic twin-arginine motif in their signal peptide across membranes. TatA could form the protein-conducting channel of the Tat system. This Rhodopseudomonas palustris (strain ATCC BAA-98 / CGA009) protein is Sec-independent protein translocase protein TatA.